The primary structure comprises 611 residues: Glutamine--fructose-6-phosphate aminotransferase [isomerizing] (611 aa).

Cys2 serves as the catalytic Nucleophile; for GATase activity. Residues 2–219 (CGIVGAVAER…EGDIAEIRRD (218 aa)) enclose the Glutamine amidotransferase type-2 domain. 2 SIS domains span residues 287-427 (AAEL…VKGS) and 460-601 (VAEL…VDQP). Lys606 functions as the For Fru-6P isomerization activity in the catalytic mechanism.

In terms of assembly, homodimer.

It is found in the cytoplasm. It carries out the reaction D-fructose 6-phosphate + L-glutamine = D-glucosamine 6-phosphate + L-glutamate. Catalyzes the first step in hexosamine metabolism, converting fructose-6P into glucosamine-6P using glutamine as a nitrogen source. This Pseudomonas syringae pv. tomato (strain ATCC BAA-871 / DC3000) protein is Glutamine--fructose-6-phosphate aminotransferase [isomerizing].